A 452-amino-acid chain; its full sequence is Bifunctional protein GlmU (452 aa).

Positions 1-231 (MSRTCLAVIL…EAELAGCNNR (231 aa)) are pyrophosphorylase. UDP-N-acetyl-alpha-D-glucosamine is bound by residues 10 to 13 (LAAG), Lys-24, Gln-77, 82 to 83 (GT), 105 to 107 (YGD), Gly-143, Glu-157, Asn-172, and Asn-229. Asp-107 contacts Mg(2+). Position 229 (Asn-229) interacts with Mg(2+). Residues 232 to 252 (AELAVIEKLWQERRRHELMLS) form a linker region. The interval 253–452 (GVSMIAPETV…MAIKAFSGKV (200 aa)) is N-acetyltransferase. Residues Arg-318 and Lys-336 each contribute to the UDP-N-acetyl-alpha-D-glucosamine site. Residue His-348 is the Proton acceptor of the active site. UDP-N-acetyl-alpha-D-glucosamine-binding residues include Tyr-351 and Asn-362. Acetyl-CoA is bound by residues Ala-365, 371–372 (NY), Ser-390, Ser-408, and Arg-425.

This sequence in the N-terminal section; belongs to the N-acetylglucosamine-1-phosphate uridyltransferase family. The protein in the C-terminal section; belongs to the transferase hexapeptide repeat family. In terms of assembly, homotrimer. Mg(2+) serves as cofactor.

The protein localises to the cytoplasm. The enzyme catalyses alpha-D-glucosamine 1-phosphate + acetyl-CoA = N-acetyl-alpha-D-glucosamine 1-phosphate + CoA + H(+). It catalyses the reaction N-acetyl-alpha-D-glucosamine 1-phosphate + UTP + H(+) = UDP-N-acetyl-alpha-D-glucosamine + diphosphate. It functions in the pathway nucleotide-sugar biosynthesis; UDP-N-acetyl-alpha-D-glucosamine biosynthesis; N-acetyl-alpha-D-glucosamine 1-phosphate from alpha-D-glucosamine 6-phosphate (route II): step 2/2. The protein operates within nucleotide-sugar biosynthesis; UDP-N-acetyl-alpha-D-glucosamine biosynthesis; UDP-N-acetyl-alpha-D-glucosamine from N-acetyl-alpha-D-glucosamine 1-phosphate: step 1/1. Its pathway is bacterial outer membrane biogenesis; LPS lipid A biosynthesis. Its function is as follows. Catalyzes the last two sequential reactions in the de novo biosynthetic pathway for UDP-N-acetylglucosamine (UDP-GlcNAc). The C-terminal domain catalyzes the transfer of acetyl group from acetyl coenzyme A to glucosamine-1-phosphate (GlcN-1-P) to produce N-acetylglucosamine-1-phosphate (GlcNAc-1-P), which is converted into UDP-GlcNAc by the transfer of uridine 5-monophosphate (from uridine 5-triphosphate), a reaction catalyzed by the N-terminal domain. The chain is Bifunctional protein GlmU from Allorhizobium ampelinum (strain ATCC BAA-846 / DSM 112012 / S4) (Agrobacterium vitis (strain S4)).